The chain runs to 137 residues: Small ribosomal subunit protein uS12 (137 aa).

Asp-89 is modified (3-methylthioaspartic acid). Positions 105–137 (AGVAGRTQRRSKYGAKRPKAGQAAAPAKGKGKK) are disordered. A compositionally biased stretch (basic residues) spans 111–123 (TQRRSKYGAKRPK). Over residues 124–137 (AGQAAAPAKGKGKK) the composition is skewed to low complexity.

It belongs to the universal ribosomal protein uS12 family. In terms of assembly, part of the 30S ribosomal subunit. Contacts proteins S8 and S17. May interact with IF1 in the 30S initiation complex.

Functionally, with S4 and S5 plays an important role in translational accuracy. In terms of biological role, interacts with and stabilizes bases of the 16S rRNA that are involved in tRNA selection in the A site and with the mRNA backbone. Located at the interface of the 30S and 50S subunits, it traverses the body of the 30S subunit contacting proteins on the other side and probably holding the rRNA structure together. The combined cluster of proteins S8, S12 and S17 appears to hold together the shoulder and platform of the 30S subunit. This is Small ribosomal subunit protein uS12 from Phocaeicola vulgatus (strain ATCC 8482 / DSM 1447 / JCM 5826 / CCUG 4940 / NBRC 14291 / NCTC 11154) (Bacteroides vulgatus).